The primary structure comprises 191 residues: CASP-like protein 2U3 (191 aa).

The Cytoplasmic segment spans residues 1 to 25; it reads MGAYDGAEAPRAAPASTAANSRPSR. Residues 26 to 46 form a helical membrane-spanning segment; sequence LLLLHSLLLRLVAVVVSILVI. The Extracellular portion of the chain corresponds to 47–68; that stretch reads AVMVHAKQRVMIFKAEWDNSKA. Residues 69–89 form a helical membrane-spanning segment; the sequence is FVALVAISAICLGYSFLQFIL. Residues 90–114 are Cytoplasmic-facing; sequence SAFHLCSKSWKSPTKCWAWMNFIAD. Residues 115-135 traverse the membrane as a helical segment; it reads QILTYAMLGAAAAAAELAYIA. Residues 136 to 157 lie on the Extracellular side of the membrane; it reads KNGSSRAQWQPICSTFNTFCTR. Asn-137 carries an N-linked (GlcNAc...) asparagine glycan. Residues 158 to 178 traverse the membrane as a helical segment; the sequence is AGASIILSFIAVLALANSSAI. The Cytoplasmic segment spans residues 179–191; it reads SAYHLFRRPSSSV.

The protein belongs to the Casparian strip membrane proteins (CASP) family. In terms of assembly, homodimer and heterodimers.

The protein localises to the cell membrane. This Selaginella moellendorffii (Spikemoss) protein is CASP-like protein 2U3.